The sequence spans 313 residues: Protoheme IX farnesyltransferase (313 aa).

9 helical membrane-spanning segments follow: residues 22 to 42, 46 to 66, 98 to 118, 121 to 141, 150 to 170, 177 to 197, 223 to 243, 246 to 266, and 284 to 304; these read FALL…VGLM, IGVH…GGGA, GEAL…LALA, VFAG…YTMW, IVIG…AATG, WLMF…LALF, ILVY…TSVG, IYLT…VQIW, and FFKL…AEAL.

Belongs to the UbiA prenyltransferase family. Protoheme IX farnesyltransferase subfamily. Interacts with CtaA.

Its subcellular location is the cell inner membrane. It catalyses the reaction heme b + (2E,6E)-farnesyl diphosphate + H2O = Fe(II)-heme o + diphosphate. It functions in the pathway porphyrin-containing compound metabolism; heme O biosynthesis; heme O from protoheme: step 1/1. Converts heme B (protoheme IX) to heme O by substitution of the vinyl group on carbon 2 of heme B porphyrin ring with a hydroxyethyl farnesyl side group. This is Protoheme IX farnesyltransferase from Ruegeria sp. (strain TM1040) (Silicibacter sp.).